The primary structure comprises 281 residues: UPF0046 protein C25E10.12 (281 aa).

It belongs to the UPF0046 family.

This chain is UPF0046 protein C25E10.12, found in Caenorhabditis elegans.